Consider the following 249-residue polypeptide: Phosphatidylglycerol--prolipoprotein diacylglyceryl transferase (249 aa).

A run of 7 helical transmembrane segments spans residues Leu-11–Leu-31, Ala-49–Ile-69, Leu-82–Tyr-102, Leu-116–Gly-136, Leu-163–Trp-183, Gly-192–Leu-212, and Leu-223–Ile-243. An a 1,2-diacyl-sn-glycero-3-phospho-(1'-sn-glycerol)-binding site is contributed by Arg-129.

The protein belongs to the Lgt family.

The protein localises to the cell membrane. It catalyses the reaction L-cysteinyl-[prolipoprotein] + a 1,2-diacyl-sn-glycero-3-phospho-(1'-sn-glycerol) = an S-1,2-diacyl-sn-glyceryl-L-cysteinyl-[prolipoprotein] + sn-glycerol 1-phosphate + H(+). Its pathway is protein modification; lipoprotein biosynthesis (diacylglyceryl transfer). In terms of biological role, catalyzes the transfer of the diacylglyceryl group from phosphatidylglycerol to the sulfhydryl group of the N-terminal cysteine of a prolipoprotein, the first step in the formation of mature lipoproteins. In Clostridium tetani (strain Massachusetts / E88), this protein is Phosphatidylglycerol--prolipoprotein diacylglyceryl transferase.